A 220-amino-acid chain; its full sequence is Uracil-DNA glycosylase (220 aa).

Residue Asp-60 is the Proton acceptor of the active site.

Belongs to the uracil-DNA glycosylase (UDG) superfamily. UNG family.

It localises to the cytoplasm. It carries out the reaction Hydrolyzes single-stranded DNA or mismatched double-stranded DNA and polynucleotides, releasing free uracil.. Its function is as follows. Excises uracil residues from the DNA which can arise as a result of misincorporation of dUMP residues by DNA polymerase or due to deamination of cytosine. The chain is Uracil-DNA glycosylase from Francisella tularensis subsp. novicida (strain U112).